The sequence spans 398 residues: UDP-N-acetylglucosamine--N-acetylmuramyl-(pentapeptide) pyrophosphoryl-undecaprenol N-acetylglucosamine transferase (398 aa).

UDP-N-acetyl-alpha-D-glucosamine is bound by residues T11–G13, N124, R164, S192, and Q318.

The protein belongs to the glycosyltransferase 28 family. MurG subfamily.

The protein resides in the cell membrane. It carries out the reaction di-trans,octa-cis-undecaprenyl diphospho-N-acetyl-alpha-D-muramoyl-L-alanyl-D-glutamyl-meso-2,6-diaminopimeloyl-D-alanyl-D-alanine + UDP-N-acetyl-alpha-D-glucosamine = di-trans,octa-cis-undecaprenyl diphospho-[N-acetyl-alpha-D-glucosaminyl-(1-&gt;4)]-N-acetyl-alpha-D-muramoyl-L-alanyl-D-glutamyl-meso-2,6-diaminopimeloyl-D-alanyl-D-alanine + UDP + H(+). It participates in cell wall biogenesis; peptidoglycan biosynthesis. Functionally, cell wall formation. Catalyzes the transfer of a GlcNAc subunit on undecaprenyl-pyrophosphoryl-MurNAc-pentapeptide (lipid intermediate I) to form undecaprenyl-pyrophosphoryl-MurNAc-(pentapeptide)GlcNAc (lipid intermediate II). The polypeptide is UDP-N-acetylglucosamine--N-acetylmuramyl-(pentapeptide) pyrophosphoryl-undecaprenol N-acetylglucosamine transferase (Deinococcus radiodurans (strain ATCC 13939 / DSM 20539 / JCM 16871 / CCUG 27074 / LMG 4051 / NBRC 15346 / NCIMB 9279 / VKM B-1422 / R1)).